The following is a 195-amino-acid chain: Thymidine kinase (195 aa).

ATP contacts are provided by residues 9 to 16 (STMNAGKS) and 87 to 90 (DEAQ). Catalysis depends on E88, which acts as the Proton acceptor. Zn(2+)-binding residues include C145, C147, C182, and H185.

The protein belongs to the thymidine kinase family. As to quaternary structure, homotetramer.

Its subcellular location is the cytoplasm. The catalysed reaction is thymidine + ATP = dTMP + ADP + H(+). The chain is Thymidine kinase from Jannaschia sp. (strain CCS1).